The chain runs to 89 residues: UPF0237 protein LMOf2365_0562 (89 aa).

The 75-residue stretch at 4-78 folds into the ACT domain; that stretch reads VLTVIGKDNV…EDLQVKIHIQ (75 aa).

This sequence belongs to the UPF0237 family.

The chain is UPF0237 protein LMOf2365_0562 from Listeria monocytogenes serotype 4b (strain F2365).